The primary structure comprises 471 residues: MDETSPLVSPDRDQTDYSYQSQCSPGVPVCLSPNGRFSAVPGVVVRIPGSATSPIRGSAASGPSPPGSPCDRERQPLLERSQTRGAAAQAERERNKFPDDPEFAEVVKKAEKAIVRDILPERISQGSSGSYFVKNEQGEIIAVFKPKNEEPYGQLNPKWTKWLQKLCCPCCFGRDCLVLNQGYLSEAGASLVDQKLELNIVPRTKVVFLASETFNYSAIDRVKSRGKRLALEKVPKVGQRFNRIGLPPKVGSFQLFVKGYKDADYWLRRFEADPLPENTNRQLQLQFERLVVLDYIIRNTDRGNDNWLIKYDCPMDSASARDDWVMVKEPVIKIAAIDNGLAFPLKHPDSWRAYPFYWAWLPQAKIQFSQEIKDLILPKISDPNFVKDLEEDLYELFKRDPGFDRGQFRKQIAVMRGQILNLTQALKDGKSPLQLVQTPPVIVETARSHQKSTSESYTQSFQSRKPFFSWW.

2 disordered regions span residues 1–25 (MDETSPLVSPDRDQTDYSYQSQCSP) and 48–101 (PGSA…PDDP). A compositionally biased stretch (basic and acidic residues) spans 90–101 (AERERNKFPDDP). The 329-residue stretch at 117–445 (DILPERISQG…VQTPPVIVET (329 aa)) folds into the PI3K/PI4K catalytic domain. Positions 123–129 (ISQGSSG) are G-loop. ATP-binding positions include 124-130 (SQGSSGS) and Lys-145. The tract at residues 150-152 (EPY) is important for substrate binding. Residues 158–171 (KWTKWLQKLCCPCC) form an important for interaction with membranes region. S-palmitoyl cysteine attachment occurs at residues Cys-167, Cys-168, Cys-170, and Cys-171. Residue 254–257 (QLFV) coordinates ATP. Positions 261 to 269 (KDADYWLRR) are important for interaction with membranes. The interval 298–306 (RNTDRGNDN) is catalytic loop. Residues 336–356 (AIDNGLAFPLKHPDSWRAYPF) are activation loop. Asp-338 contributes to the ATP binding site. The interval 351-360 (WRAYPFYWAW) is important for interaction with membranes.

The protein belongs to the PI3/PI4-kinase family. Type II PI4K subfamily.

Its subcellular location is the golgi apparatus. It is found in the trans-Golgi network membrane. The protein localises to the membrane raft. The protein resides in the endosome. It localises to the endosome membrane. Its subcellular location is the cytoplasmic vesicle. It is found in the cell projection. The protein localises to the dendrite. The protein resides in the presynaptic cell membrane. It localises to the synapse. Its subcellular location is the synaptosome. It is found in the mitochondrion. The protein localises to the membrane. The protein resides in the cell membrane. It localises to the perikaryon. Its subcellular location is the neuron projection. The enzyme catalyses a 1,2-diacyl-sn-glycero-3-phospho-(1D-myo-inositol) + ATP = a 1,2-diacyl-sn-glycero-3-phospho-(1D-myo-inositol 4-phosphate) + ADP + H(+). In terms of biological role, membrane-bound phosphatidylinositol-4 kinase (PI4-kinase) that catalyzes the phosphorylation of phosphatidylinositol (PI) to phosphatidylinositol 4-phosphate (PI4P), a lipid that plays important roles in endocytosis, Golgi function, protein sorting and membrane trafficking. Besides, phosphorylation of phosphatidylinositol (PI) to phosphatidylinositol 4-phosphate (PI4P) is the first committed step in the generation of phosphatidylinositol 4,5-bisphosphate (PIP2), a precursor of the second messenger inositol 1,4,5-trisphosphate (InsP3). The chain is Phosphatidylinositol 4-kinase type 2-alpha (pi4k2a) from Xenopus tropicalis (Western clawed frog).